Here is a 232-residue protein sequence, read N- to C-terminus: MAKISKRRQAFAAKVDRQKLYAIEDALSLVKECASAKFDESIDVAVQLGIDAKKSDQVVRGSVVLPAGTGKSVRVAVFAQGEKAEQARAAGAEIVGMEDLAEQIKAGQMDFDIVIASPDTMRIVGTLGQILGPRGLMPNPKVGTVTPDVATAVKNAKAGQVQFRVDKAGIIHATIGRASFEPTALRSNLSALIEALQKAKPATSKGVYLRKIALSSTMGVGVRVDHATLAAQ.

Belongs to the universal ribosomal protein uL1 family. Part of the 50S ribosomal subunit.

In terms of biological role, binds directly to 23S rRNA. The L1 stalk is quite mobile in the ribosome, and is involved in E site tRNA release. Functionally, protein L1 is also a translational repressor protein, it controls the translation of the L11 operon by binding to its mRNA. This Burkholderia cenocepacia (strain HI2424) protein is Large ribosomal subunit protein uL1.